Reading from the N-terminus, the 224-residue chain is Putative adhesin RMA_1308 (224 aa).

The signal sequence occupies residues 1–22; that stretch reads MQKLLLIAATSATILSSSLSFA.

This is Putative adhesin RMA_1308 from Rickettsia massiliae (strain Mtu5).